The primary structure comprises 70 residues: DNA gyrase inhibitor YacG (70 aa).

Zn(2+) contacts are provided by cysteine 20, cysteine 23, cysteine 35, and cysteine 39.

Belongs to the DNA gyrase inhibitor YacG family. Interacts with GyrB. Requires Zn(2+) as cofactor.

In terms of biological role, inhibits all the catalytic activities of DNA gyrase by preventing its interaction with DNA. Acts by binding directly to the C-terminal domain of GyrB, which probably disrupts DNA binding by the gyrase. In Rhizobium etli (strain ATCC 51251 / DSM 11541 / JCM 21823 / NBRC 15573 / CFN 42), this protein is DNA gyrase inhibitor YacG.